The following is a 1222-amino-acid chain: MESSKFVKIIWVFGIWILVFTFLIIYNNYDYKSTFGINKFEKRSLKTINQINNKENGDDKKLSVFLIPHSHCDGGWLQDYDGYYYNIVQYILSGVVNELNLDKEKKFNWVEIGFFSRWWNDQNEIQKEIVRNLINNKQLSFISGGWVQNDEATATIDDVITQMTQGHQWLKDTLNYTVEYAWQIDPFGYSSSTPTIFSSMGIKGLVINRVSNDVKSYMKSVKEMEFIWKGSESLGEQSQMLVSTLNIHYDYPKHIDPKKDFSLNDRIKGFTKYLNDLSKTRESNILMIPLGDDFRYSNAKTEFSVSKEWVKALQDNKEYYNIKEIKYATLDEYFIALEDSFLRNNKFGKSRKQNVYTETFSDGDDEVSALSLYNKDFFPYSTGNLEYWTGYYTTRPLLKRLIRESSLLQKSSDILYTLAIGENSNNQIDINNLQTLSNQLNENRNTIALVQHHDIVTGTSRSFVLNDNFQRLQKSRISNYNIISNSLEYLLNKSNNKTNNNNNNNNKNNNNNNNNNNNNNNNLKNTNSISTTGSSSSSGSGSSNNNNNTVNKSEPFNFENAIDLSNESNNQYSLVFHNTLGWEVNQHVSFRIKVNKNDNQLLESIQLVEAISNKTIQIQIIPIQDDSNCQSIENNYIVFAIINLPPLGLNTYYLSIANSEDSKSNFTYLSKPKLLKKGNEINFNNNRFKVEFESNGLISKITDKNSNEIKTIEQTFHQYSTKKSGPYIFNVKGGKKHGFLENPDKFIYHDGPLVSQLTMLYGVDDYCNVTSIVVQRIYKNNNEINNSNSKSLITENYIETGYSINGDMNRETTINYKVKDLENDDIFYTDNGLESRKRIYNHDRSVNQNYYPVLGYIKLKETSENNNHQYTVYVDRSVGATSPSDGEMEIMIHRTMDTDDWKGVNWPSKDIGRSDAKLYFNMDLVNNQLQNEKRISLHITNQPIMFVKKHNNQTGYLLKYSPLSNQLPSNIHLQSLLTLKNNTVGLRLFNIHEVDSNTQSTTDTDKSTLFNELEISNFIETGLSFLKLTKNNLIDKFSTRINKKFPIKCGESEYSFINEKPSSIIFSNNGTNNIIDGENKGENNKTIETIQIKPHEIKSFTFNFNFQLDQIIPNNNNNNNKYAINKELNNEYIEQSIENQRYEYDFSFFPIKPTFYDDRGKYNRPNHLALILSLSIGIPAGILIIVIALVVTYKKRKNRKTLTSSNSSSNLIQQEDQTDYSP.

Residues 1 to 21 (MESSKFVKIIWVFGIWILVFT) form the signal peptide. At 22 to 1170 (FLIIYNNYDY…KYNRPNHLAL (1149 aa)) the chain is on the extracellular side. Zn(2+) contacts are provided by His71 and Asp73. N-linked (GlcNAc...) asparagine glycosylation occurs at Asn175. 2 residues coordinate Zn(2+): Asp185 and His453. The active-site Nucleophile is Asp185. Asn492, Asn496, Asn547, Asn551, Asn566, Asn613, Asn665, Asn768, Asn785, Asn952, Asn981, Asn1069, and Asn1084 each carry an N-linked (GlcNAc...) asparagine glycan. The segment covering 493 to 549 (KSNNKTNNNNNNNNKNNNNNNNNNNNNNNNLKNTNSISTTGSSSSSGSGSSNNNNNT) has biased composition (low complexity). The tract at residues 493 to 554 (KSNNKTNNNN…NNNNTVNKSE (62 aa)) is disordered. The chain crosses the membrane as a helical span at residues 1171-1191 (ILSLSIGIPAGILIIVIALVV). At 1192-1222 (TYKKRKNRKTLTSSNSSSNLIQQEDQTDYSP) the chain is on the cytoplasmic side. Low complexity predominate over residues 1202–1211 (LTSSNSSSNL). Positions 1202-1222 (LTSSNSSSNLIQQEDQTDYSP) are disordered. The span at 1212–1222 (IQQEDQTDYSP) shows a compositional bias: polar residues.

Belongs to the glycosyl hydrolase 38 family. It depends on Zn(2+) as a cofactor.

It is found in the membrane. It catalyses the reaction Hydrolysis of terminal, non-reducing alpha-D-mannose residues in alpha-D-mannosides.. In Dictyostelium discoideum (Social amoeba), this protein is Alpha-mannosidase D (manD).